The sequence spans 141 residues: Nucleoside diphosphate kinase (141 aa).

ATP-binding residues include lysine 11, phenylalanine 59, arginine 87, threonine 93, arginine 104, and asparagine 114. Catalysis depends on histidine 117, which acts as the Pros-phosphohistidine intermediate.

The protein belongs to the NDK family. As to quaternary structure, homotetramer. Requires Mg(2+) as cofactor.

The protein resides in the cytoplasm. It carries out the reaction a 2'-deoxyribonucleoside 5'-diphosphate + ATP = a 2'-deoxyribonucleoside 5'-triphosphate + ADP. The catalysed reaction is a ribonucleoside 5'-diphosphate + ATP = a ribonucleoside 5'-triphosphate + ADP. Functionally, major role in the synthesis of nucleoside triphosphates other than ATP. The ATP gamma phosphate is transferred to the NDP beta phosphate via a ping-pong mechanism, using a phosphorylated active-site intermediate. The protein is Nucleoside diphosphate kinase of Polynucleobacter necessarius subsp. necessarius (strain STIR1).